The primary structure comprises 203 residues: Orotate phosphoribosyltransferase (203 aa).

Residues Arg94, Lys98, His100, and 120–128 (EDLISTGGS) each bind 5-phospho-alpha-D-ribose 1-diphosphate. Ser124 serves as a coordination point for orotate.

The protein belongs to the purine/pyrimidine phosphoribosyltransferase family. PyrE subfamily. In terms of assembly, homodimer. It depends on Mg(2+) as a cofactor.

It catalyses the reaction orotidine 5'-phosphate + diphosphate = orotate + 5-phospho-alpha-D-ribose 1-diphosphate. The protein operates within pyrimidine metabolism; UMP biosynthesis via de novo pathway; UMP from orotate: step 1/2. Its function is as follows. Catalyzes the transfer of a ribosyl phosphate group from 5-phosphoribose 1-diphosphate to orotate, leading to the formation of orotidine monophosphate (OMP). The chain is Orotate phosphoribosyltransferase from Staphylococcus epidermidis (strain ATCC 35984 / DSM 28319 / BCRC 17069 / CCUG 31568 / BM 3577 / RP62A).